The sequence spans 492 residues: Glutamyl-tRNA(Gln) amidotransferase subunit A (492 aa).

Catalysis depends on charge relay system residues lysine 77 and serine 152. Serine 176 functions as the Acyl-ester intermediate in the catalytic mechanism.

Belongs to the amidase family. GatA subfamily. Heterotrimer of A, B and C subunits.

It catalyses the reaction L-glutamyl-tRNA(Gln) + L-glutamine + ATP + H2O = L-glutaminyl-tRNA(Gln) + L-glutamate + ADP + phosphate + H(+). Functionally, allows the formation of correctly charged Gln-tRNA(Gln) through the transamidation of misacylated Glu-tRNA(Gln) in organisms which lack glutaminyl-tRNA synthetase. The reaction takes place in the presence of glutamine and ATP through an activated gamma-phospho-Glu-tRNA(Gln). The chain is Glutamyl-tRNA(Gln) amidotransferase subunit A (gatA) from Chlamydia pneumoniae (Chlamydophila pneumoniae).